Consider the following 32-residue polypeptide: Photosystem II reaction center protein Z (32 aa).

The helical transmembrane segment at 12–32 (FGAAAWIGLVLLVGTLYYFVV) threads the bilayer.

Belongs to the PsbZ family. In terms of assembly, PSII is composed of 1 copy each of membrane proteins PsbA, PsbB, PsbC, PsbD, PsbE, PsbF, PsbH, PsbI, PsbJ, PsbK, PsbL, PsbM, PsbT, PsbY, PsbZ, Psb30/Ycf12, at least 3 peripheral proteins of the oxygen-evolving complex and a large number of cofactors. It forms dimeric complexes.

The protein localises to the plastid. It is found in the chloroplast thylakoid membrane. May control the interaction of photosystem II (PSII) cores with the light-harvesting antenna, regulates electron flow through the 2 photosystem reaction centers. PSII is a light-driven water plastoquinone oxidoreductase, using light energy to abstract electrons from H(2)O, generating a proton gradient subsequently used for ATP formation. The chain is Photosystem II reaction center protein Z from Euglena granulata.